The chain runs to 245 residues: rRNA adenine N-6-methyltransferase (245 aa).

Residues asparagine 10, leucine 12, glycine 37, glutamate 58, aspartate 83, and serine 100 each contribute to the S-adenosyl-L-methionine site.

The protein belongs to the class I-like SAM-binding methyltransferase superfamily. rRNA adenine N(6)-methyltransferase family.

It catalyses the reaction adenosine(2085) in 23S rRNA + 2 S-adenosyl-L-methionine = N(6)-dimethyladenosine(2085) in 23S rRNA + 2 S-adenosyl-L-homocysteine + 2 H(+). In terms of biological role, this protein produces a dimethylation of the adenine residue at position 2085 in 23S rRNA, resulting in reduced affinity between ribosomes and macrolide-lincosamide-streptogramin B antibiotics. The sequence is that of rRNA adenine N-6-methyltransferase (ermBP) from Clostridium perfringens.